A 197-amino-acid chain; its full sequence is Protein Hikeshi (197 aa).

A required for F-X-F-G repeats-nucleoporins recognition and nuclear import region spans residues 18-55 (VAEDKFVFDLPDYENINHVVVFMLGTVPFPEGMGGSVY). The tract at residues 124-134 (QTPVGNAAVSS) is flexible linker region involved in nuclear import of HSP70 proteins.

It belongs to the OPI10 family. In terms of assembly, forms an asymmetric homodimer; required for binding and nuclear import of HSP70 proteins. Interacts with ATP-bound HSP70 proteins. Interacts with NUP62 and NUP153 (via F-X-F-G repeats). Interacts with HSPA8.

It localises to the cytoplasm. The protein resides in the cytosol. It is found in the nucleus. Its function is as follows. Acts as a specific nuclear import carrier for HSP70 proteins following heat-shock stress: acts by mediating the nucleoporin-dependent translocation of ATP-bound HSP70 proteins into the nucleus. HSP70 proteins import is required to protect cells from heat shock damages. Does not translocate ADP-bound HSP70 proteins into the nucleus. In Bos taurus (Bovine), this protein is Protein Hikeshi.